The sequence spans 93 residues: Small ribosomal subunit protein uS19 (93 aa).

This sequence belongs to the universal ribosomal protein uS19 family.

Functionally, protein S19 forms a complex with S13 that binds strongly to the 16S ribosomal RNA. The protein is Small ribosomal subunit protein uS19 of Frankia alni (strain DSM 45986 / CECT 9034 / ACN14a).